The chain runs to 255 residues: 4-diphosphocytidyl-2-C-methyl-D-erythritol kinase (255 aa).

Lys9 is a catalytic residue. ATP is bound at residue 95–105 (PSQAGLGGGSS). Residue Asp137 is part of the active site.

The protein belongs to the GHMP kinase family. IspE subfamily.

It carries out the reaction 4-CDP-2-C-methyl-D-erythritol + ATP = 4-CDP-2-C-methyl-D-erythritol 2-phosphate + ADP + H(+). Its pathway is isoprenoid biosynthesis; isopentenyl diphosphate biosynthesis via DXP pathway; isopentenyl diphosphate from 1-deoxy-D-xylulose 5-phosphate: step 3/6. In terms of biological role, catalyzes the phosphorylation of the position 2 hydroxy group of 4-diphosphocytidyl-2C-methyl-D-erythritol. This is 4-diphosphocytidyl-2-C-methyl-D-erythritol kinase from Sulfurovum sp. (strain NBC37-1).